We begin with the raw amino-acid sequence, 1361 residues long: DNA-directed RNA polymerase subunit beta (1361 aa).

It belongs to the RNA polymerase beta chain family. The RNAP catalytic core consists of 2 alpha, 1 beta, 1 beta' and 1 omega subunit. When a sigma factor is associated with the core the holoenzyme is formed, which can initiate transcription.

It carries out the reaction RNA(n) + a ribonucleoside 5'-triphosphate = RNA(n+1) + diphosphate. DNA-dependent RNA polymerase catalyzes the transcription of DNA into RNA using the four ribonucleoside triphosphates as substrates. This is DNA-directed RNA polymerase subunit beta from Dichelobacter nodosus (strain VCS1703A).